Here is a 273-residue protein sequence, read N- to C-terminus: MSDTLTNTGRYQATFAKLKAEGRGAFVPFVTLGDPSPELSLKIIDTLVQNGADALELGFPFSDPLADGPVIQGANLRSLAAGTTPTACFELLAQVRAKYPELPIGLLLYANLVFANGIDAFYAKAQQAGVDSVLIADVPVEESAPFSEAAKAHGIAPIFIAPPNADSETLALVSASGEGYTYLLSRAGVTGTDTKAGVPVEEILSKLKTFNAPPPLLGFGIAEPAQVTAAIKAGAAGAISGSAVVKIIETHQHDEAKLLATLGDFTRAMKAAT.

Catalysis depends on proton acceptor residues E56 and D67.

Belongs to the TrpA family. Tetramer of two alpha and two beta chains.

It carries out the reaction (1S,2R)-1-C-(indol-3-yl)glycerol 3-phosphate + L-serine = D-glyceraldehyde 3-phosphate + L-tryptophan + H2O. The protein operates within amino-acid biosynthesis; L-tryptophan biosynthesis; L-tryptophan from chorismate: step 5/5. The alpha subunit is responsible for the aldol cleavage of indoleglycerol phosphate to indole and glyceraldehyde 3-phosphate. This Shewanella baltica (strain OS185) protein is Tryptophan synthase alpha chain.